The sequence spans 260 residues: 3beta-hydroxysteroid dehydrogenase 2 (260 aa).

Residues D43, 69 to 70 (DV), N96, Y163, and K167 contribute to the NAD(+) site. Catalysis depends on Y163, which acts as the Proton acceptor.

The protein belongs to the short-chain dehydrogenases/reductases (SDR) family.

It carries out the reaction 3-oxo-5beta-cholan-24-oate + NADH + H(+) = isolithocholate + NAD(+). The catalysed reaction is 12alpha-hydroxy-3-oxo-5beta-cholan-24-oate + NADH + H(+) = isodeoxycholate + NAD(+). The enzyme catalyses 12alpha-hydroxy-3-oxo-5beta-cholan-24-oate + NADPH + H(+) = isodeoxycholate + NADP(+). It catalyses the reaction 7alpha,12alpha-dihydroxy-3-oxo-5beta-cholan-24-oate + NADH + H(+) = isocholate + NAD(+). It carries out the reaction 3-oxochenodeoxycholate + NADH + H(+) = isochenodeoxycholate + NAD(+). In terms of biological role, involved in the modification of secondary bile acids into iso-bile acids (3beta-bile acids) via epimerization of the 3-OH group through a 3-oxo-intermediate. Catalyzes the reduction of 12-alpha-hydroxy-3-oxo-5-beta-cholan-24-oate (3-oxo-DCA) and 3-oxo-5-beta-cholan-24-oate (3-oxo-LCA) to yield isodeoxycholate (isoDCA) and isolithocholate (isoLCA), respectively. Is also able to catalyze the reduction of 3-dehydrocholate (3-oxo-CA or 7alpha,12alpha-dihydroxy-3-oxo-5beta-cholan-24-oate) and 7-alpha-hydroxy-3-oxo-5-beta-cholan-24-oate (3-oxo-CDCA), into isocholate (isoCA) and isochenodeoxycholate (isoCDCA), respectively. Accepts both NADH and NADPH as cosubstrates. The conversion of the abundant bile acid deoxycholate (DCA) into isoDCA by the gut bacterium E.lenta favors the growth of the keystone commensal genus Bacteroides, since isoDCA is less cytotoxic than its parent compound, DCA; iso-bile acids have thus a potential role in modulating gut community composition. This is 3beta-hydroxysteroid dehydrogenase 2 from Eggerthella lenta (strain ATCC 25559 / DSM 2243 / CCUG 17323 / JCM 9979 / KCTC 3265 / NCTC 11813 / VPI 0255 / 1899 B) (Eubacterium lentum).